A 274-amino-acid polypeptide reads, in one-letter code: 3-methyl-2-oxobutanoate hydroxymethyltransferase (274 aa).

Residues Asp49 and Asp88 each coordinate Mg(2+). 3-methyl-2-oxobutanoate contacts are provided by residues 49-50 (DS), Asp88, and Lys118. Glu120 serves as a coordination point for Mg(2+). The active-site Proton acceptor is the Glu187.

The protein belongs to the PanB family. In terms of assembly, homodecamer; pentamer of dimers. Requires Mg(2+) as cofactor.

The protein resides in the cytoplasm. It catalyses the reaction 3-methyl-2-oxobutanoate + (6R)-5,10-methylene-5,6,7,8-tetrahydrofolate + H2O = 2-dehydropantoate + (6S)-5,6,7,8-tetrahydrofolate. Its pathway is cofactor biosynthesis; (R)-pantothenate biosynthesis; (R)-pantoate from 3-methyl-2-oxobutanoate: step 1/2. In terms of biological role, catalyzes the reversible reaction in which hydroxymethyl group from 5,10-methylenetetrahydrofolate is transferred onto alpha-ketoisovalerate to form ketopantoate. The protein is 3-methyl-2-oxobutanoate hydroxymethyltransferase of Parvibaculum lavamentivorans (strain DS-1 / DSM 13023 / NCIMB 13966).